We begin with the raw amino-acid sequence, 489 residues long: Ecdysteroid UDP-glucosyltransferase (489 aa).

Residues 1–17 (MVFLIIALTLLATGARA) form the signal peptide.

Belongs to the UDP-glycosyltransferase family.

Functionally, catalyzes the transfer of glucose from UDP-glucose to ecdysteroids which are insect molting hormones. Expression of egt interferes with normal insect development and block molting. In Orgyia pseudotsugata (Douglas-fir tussock moth), this protein is Ecdysteroid UDP-glucosyltransferase (EGT).